The chain runs to 193 residues: Peptidyl-tRNA hydrolase (193 aa).

TRNA is bound at residue H17. Residue H22 is the Proton acceptor of the active site. Residues F68, N70, and N116 each contribute to the tRNA site.

It belongs to the PTH family. Monomer.

The protein resides in the cytoplasm. The catalysed reaction is an N-acyl-L-alpha-aminoacyl-tRNA + H2O = an N-acyl-L-amino acid + a tRNA + H(+). Its function is as follows. Hydrolyzes ribosome-free peptidyl-tRNAs (with 1 or more amino acids incorporated), which drop off the ribosome during protein synthesis, or as a result of ribosome stalling. Catalyzes the release of premature peptidyl moieties from peptidyl-tRNA molecules trapped in stalled 50S ribosomal subunits, and thus maintains levels of free tRNAs and 50S ribosomes. This Xanthomonas campestris pv. campestris (strain ATCC 33913 / DSM 3586 / NCPPB 528 / LMG 568 / P 25) protein is Peptidyl-tRNA hydrolase.